Reading from the N-terminus, the 375-residue chain is Putative F-box/kelch-repeat protein At3g24610 (375 aa).

The tract at residues 1–27 is disordered; sequence MSNEAPEVEPHSKRRKKEASPSSSSGF. The F-box domain maps to 25–71; the sequence is SGFLQSLPEAVAMICLARVSRLDHAALSLVSKSCRSMVLSPELYQTR. The Kelch repeat unit spans residues 138–183; the sequence is KINVWGGCKYKHYYDWGEVFDPKTQTWADMSIPKPVREEKIYVVDS.

The polypeptide is Putative F-box/kelch-repeat protein At3g24610 (Arabidopsis thaliana (Mouse-ear cress)).